Here is a 63-residue protein sequence, read N- to C-terminus: Conotoxin TeAr193 (63 aa).

The first 22 residues, 1–22 (MRCLPVFVILLLLIASAPSVDA), serve as a signal peptide directing secretion. A propeptide spanning residues 23–48 (QPKTKDDIPQASFLDNAKRYLQVLES) is cleaved from the precursor.

It belongs to the conotoxin T superfamily. Contains 2 disulfide bonds that can be either 'C1-C3, C2-C4' or 'C1-C4, C2-C3', since these disulfide connectivities have been observed for conotoxins with cysteine framework V (for examples, see AC P0DQQ7 and AC P81755). In terms of tissue distribution, expressed by the venom duct.

Its subcellular location is the secreted. This is Conotoxin TeAr193 from Conus textile (Cloth-of-gold cone).